The chain runs to 204 residues: Small ribosomal subunit protein uS7 (204 aa).

Met1 is modified (N-acetylmethionine). Residue Thr2 is modified to N-acetylthreonine; in 40S ribosomal protein S5, N-terminally processed. Phosphothreonine is present on Thr14. The residue at position 47 (Lys47) is an N6-acetyllysine; alternate. Lys47 is covalently cross-linked (Glycyl lysine isopeptide (Lys-Gly) (interchain with G-Cter in SUMO2); alternate). Ser142 bears the Phosphoserine mark.

The protein belongs to the universal ribosomal protein uS7 family. In terms of assembly, component of the small ribosomal subunit. Part of the small subunit (SSU) processome, composed of more than 70 proteins and the RNA chaperone small nucleolar RNA (snoRNA) U3.

It is found in the cytoplasm. The protein localises to the nucleus. It localises to the nucleolus. Functionally, component of the small ribosomal subunit. The ribosome is a large ribonucleoprotein complex responsible for the synthesis of proteins in the cell. Part of the small subunit (SSU) processome, first precursor of the small eukaryotic ribosomal subunit. During the assembly of the SSU processome in the nucleolus, many ribosome biogenesis factors, an RNA chaperone and ribosomal proteins associate with the nascent pre-rRNA and work in concert to generate RNA folding, modifications, rearrangements and cleavage as well as targeted degradation of pre-ribosomal RNA by the RNA exosome. This chain is Small ribosomal subunit protein uS7 (RPS5), found in Bos taurus (Bovine).